The primary structure comprises 404 residues: Peroxisomal biogenesis factor 9 (404 aa).

3 consecutive transmembrane segments (helical) span residues 73–93, 94–114, and 149–169; these read FLFL…SLVF, LLGV…LLMG, and FGLD…FQVV. The tract at residues 180 to 214 is disordered; the sequence is DGQRSQQSQNSGMNVASSSRGRHQLVPDRPGSQLS. Polar residues predominate over residues 181-198; it reads GQRSQQSQNSGMNVASSS. A helical membrane pass occupies residues 349-369; it reads FFVGLVSWIVDETAACVVFCL.

The protein resides in the peroxisome membrane. Functionally, essential for the import of peroxisomal matrix proteins. The polypeptide is Peroxisomal biogenesis factor 9 (PEX9) (Yarrowia lipolytica (strain CLIB 122 / E 150) (Yeast)).